The chain runs to 158 residues: NADH-quinone oxidoreductase subunit B (158 aa).

Residues Cys-37, Cys-38, Cys-102, and Cys-132 each contribute to the [4Fe-4S] cluster site.

This sequence belongs to the complex I 20 kDa subunit family. In terms of assembly, NDH-1 is composed of 14 different subunits. Subunits NuoB, C, D, E, F, and G constitute the peripheral sector of the complex. The cofactor is [4Fe-4S] cluster.

Its subcellular location is the cell inner membrane. It catalyses the reaction a quinone + NADH + 5 H(+)(in) = a quinol + NAD(+) + 4 H(+)(out). Functionally, NDH-1 shuttles electrons from NADH, via FMN and iron-sulfur (Fe-S) centers, to quinones in the respiratory chain. Couples the redox reaction to proton translocation (for every two electrons transferred, four hydrogen ions are translocated across the cytoplasmic membrane), and thus conserves the redox energy in a proton gradient. The protein is NADH-quinone oxidoreductase subunit B of Leptothrix cholodnii (strain ATCC 51168 / LMG 8142 / SP-6) (Leptothrix discophora (strain SP-6)).